The primary structure comprises 550 residues: Arginine--tRNA ligase (550 aa).

Residues 122 to 132 (GNPTGPLHLAH) carry the 'HIGH' region motif.

The protein belongs to the class-I aminoacyl-tRNA synthetase family. In terms of assembly, monomer.

The protein localises to the cytoplasm. It catalyses the reaction tRNA(Arg) + L-arginine + ATP = L-arginyl-tRNA(Arg) + AMP + diphosphate. This is Arginine--tRNA ligase from Tropheryma whipplei (strain TW08/27) (Whipple's bacillus).